The following is a 90-amino-acid chain: Histone H1.M6.2 (90 aa).

A disordered region spans residues 1–90 (MSDAAVPPKK…KAVKKAPKKK (90 aa)). The segment covering 11 to 90 (ASPKKAAAKK…KAVKKAPKKK (80 aa)) has biased composition (basic residues).

Its subcellular location is the nucleus. The protein resides in the chromosome. This Trypanosoma cruzi protein is Histone H1.M6.2.